Consider the following 506-residue polypeptide: MGFERAFVESSPEQENKLFVGVSYMDSSNKNQDPSESNNQISFGGQHQHHQQQFFYNHHQQQQLQNNNQVSFGMMQQSSSAIPGSLISKDSAGAYDLGELDQALFQYLDGQEPSSIQEQRQNSGMRPPTLNIFPSQPMHVEPSTTNKMNTGLVSPAISGSKRSSQPSMELSNNLKNNDAPSASGPEPPKAAKREGNRKGPTSSSEQDAPKTPDPKTLRRLAQNREAARKSRLRKKAYVQQLESSRIRLTQLEQELQRARAQGYYFGGNSLLGGEQNLPVNLANMSSDAAVFDMEYARWLEEHHRLMCELRNAVQEHFPENELRIYVDNCVTHYDEIMNLKSMLTKSDVFHLVSGMWKTPAERCFMWMGGFRPSELLKIILSQIEPLTEQQLMGICGLQQSTQEAEDALSQGLEALNHSLSDTIASDALSCPQNMANYMGQMALAMNKLSTLEGFVRQADNLRHQTIHRLHQLLTTRQAARCFLAIAEYFHRLRALSSLWHARPRQE.

2 disordered regions span residues 22-50 and 113-218; these read VSYM…HQHH and PSSI…KTLR. Polar residues-rich tracts occupy residues 25–45, 113–124, 142–152, and 160–180; these read MDSS…SFGG, PSSIQEQRQNSG, PSTTNKMNTGL, and SKRS…NDAP. Residues 207–216 are compositionally biased toward basic and acidic residues; sequence DAPKTPDPKT. Residues 213–257 enclose the bZIP domain; it reads DPKTLRRLAQNREAARKSRLRKKAYVQQLESSRIRLTQLEQELQR. The segment at 215 to 235 is basic motif; sequence KTLRRLAQNREAARKSRLRKK. Positions 217–224 match the Nuclear localization signal motif; sequence LRRLAQNR. Residues 241–255 are leucine-zipper; the sequence is LESSRIRLTQLEQEL. In terms of domain architecture, DOG1 spans 288-502; that stretch reads AAVFDMEYAR…RALSSLWHAR (215 aa).

This sequence belongs to the bZIP family. In terms of assembly, binds DNA as a dimer. Interacts with TGA2.2. As to expression, specifically expressed in roots.

It localises to the nucleus. Functionally, transcription activator that binds to as1-like elements (5'-TGACGTAAgggaTGACGCA-3') in promoters of target genes. Regulates transcription in response to plant signaling molecules salicylic acid (SA), methyl jasmonate (MJ) and auxin (2,4D) only in leaves. Prevents lateral branching and may repress defense signaling. In Nicotiana tabacum (Common tobacco), this protein is bZIP transcription factor TGA10.